The sequence spans 1446 residues: Toll-like receptor 7 (1446 aa).

The signal sequence occupies residues 1–16 (MAAILLLLLGFSWSLA). Residues 17 to 1049 (VESALAPKES…QHGIPESYIP (1033 aa)) lie on the Extracellular side of the membrane. 23 LRR repeats span residues 133 to 156 (LQTL…AFEG), 158 to 180 (ATLK…TLEL), 188 to 211 (LKQL…FLCP), 213 to 235 (GNLQ…GFAD), 246 to 270 (GSEL…GISR), 271 to 294 (LRRL…ALAG), 295 to 318 (LASL…LFAG), 320 to 342 (KELR…LFHR), 344 to 368 (EQLL…TFAG), 369 to 392 (LIRL…TFKE), 393 to 416 (LYFL…AFLP), 417 to 440 (LYNL…LFNG), 442 to 464 (YVLS…VFKN), 465 to 488 (CSDL…LQDL), 489 to 511 (AMLR…SFKN), 513 to 535 (HQLT…MFQD), 536 to 559 (LPRL…SFDK), 561 to 582 (FELE…VFAT), 584 to 605 (VSLL…AFIP), 606 to 629 (SNLK…KLQE), 631 to 652 (IRVK…MSIP), 653 to 675 (NTIE…AFVD), and 677 to 699 (ANLA…QLRV). The 58-residue stretch at 716-773 (NPFECDCTMDWLQRINNLTTRQHPRVMDMANIECVMPHARGAAVRPLSGLRPQDFLCR) folds into the LRRCT domain. 3 disulfide bridges follow: Cys-722/Cys-772, Cys-796/Cys-802, and Cys-800/Cys-815. 6 LRR repeats span residues 828 to 851 (PMDS…AFIG), 852 to 875 (RKNL…TFAS), 876 to 899 (LASL…EFEQ), 900 to 923 (LSAL…TLAP), 925 to 947 (AALE…QMHA), and 951 to 979 (GTRL…SYVA). The cysteines at positions 966 and 993 are disulfide-linked. The chain crosses the membrane as a helical span at residues 1050–1070 (LLAAALALLFLLVVIAMVFAF). Over 1071–1446 (RESLRIWLFA…QGPHVQAYLV (376 aa)) the chain is Cytoplasmic. A TIR domain is found at 1096-1233 (KLYDAVLLHS…HFWEKLRYAL (138 aa)). 2 disordered regions span residues 1301–1332 (QNYS…NHHL) and 1388–1446 (RPKR…AYLV). The span at 1395–1413 (HLQQAQAGTLGSKASQAAH) shows a compositional bias: polar residues. Positions 1414 to 1426 (QQQQQQQQQQQQQ) are enriched in low complexity. Residues 1427 to 1439 (PNPTAVSGQQQGP) show a composition bias toward polar residues.

It belongs to the Toll-like receptor family. As to expression, expressed in the fan-shaped body and the ellipsoid body, which are components of the locomotion center in the CNS (at protein level).

It is found in the cell membrane. Its function is as follows. Toll-related receptor which binds to the neurotrophins NT1 and spz5. Essential for antiviral autophagy, it detects and binds to the vesicular stomatitis virus (vsv) following infection. This role is likely to be independent of the canonical Toll, immune deficiency, and JAK-STAT signaling pathways. Functions in olfactory circuit assembly by promoting synaptic partner matching between olfactory receptor neurons (ORN) axons and projection neurons (PN) dendrites partners in the antennal lobe. Function in the Va1d ORNs is necessary and sufficient for correct targeting to their partner PN dendrites. Also involved in the targeting of other classes of ORN axons. Functions with Toll-6 to regulate motor axon targeting and neuronal survival in the central nervous system (CNS). May be an upstream component of the NF-kappa-B (rel) regulatory cascade. This is Toll-like receptor 7 from Drosophila melanogaster (Fruit fly).